A 30-amino-acid polypeptide reads, in one-letter code: Uperin-6.2 (30 aa).

Expressed by the skin dorsal glands.

The protein resides in the secreted. The protein is Uperin-6.2 of Uperoleia inundata (Floodplain toadlet).